Here is a 158-residue protein sequence, read N- to C-terminus: 2-C-methyl-D-erythritol 2,4-cyclodiphosphate synthase (158 aa).

Residues aspartate 9 and histidine 11 each coordinate a divalent metal cation. 4-CDP-2-C-methyl-D-erythritol 2-phosphate is bound by residues 9-11 (DAH) and 35-36 (HS). Histidine 43 contributes to the a divalent metal cation binding site. Residues 57–59 (DIG), 62–66 (FPDTD), 133–136 (TTTE), phenylalanine 140, and arginine 143 contribute to the 4-CDP-2-C-methyl-D-erythritol 2-phosphate site.

Belongs to the IspF family. Homotrimer. It depends on a divalent metal cation as a cofactor.

The catalysed reaction is 4-CDP-2-C-methyl-D-erythritol 2-phosphate = 2-C-methyl-D-erythritol 2,4-cyclic diphosphate + CMP. It functions in the pathway isoprenoid biosynthesis; isopentenyl diphosphate biosynthesis via DXP pathway; isopentenyl diphosphate from 1-deoxy-D-xylulose 5-phosphate: step 4/6. Involved in the biosynthesis of isopentenyl diphosphate (IPP) and dimethylallyl diphosphate (DMAPP), two major building blocks of isoprenoid compounds. Catalyzes the conversion of 4-diphosphocytidyl-2-C-methyl-D-erythritol 2-phosphate (CDP-ME2P) to 2-C-methyl-D-erythritol 2,4-cyclodiphosphate (ME-CPP) with a corresponding release of cytidine 5-monophosphate (CMP). In Methylococcus capsulatus (strain ATCC 33009 / NCIMB 11132 / Bath), this protein is 2-C-methyl-D-erythritol 2,4-cyclodiphosphate synthase.